We begin with the raw amino-acid sequence, 95 residues long: Co-chaperonin GroES (95 aa).

This sequence belongs to the GroES chaperonin family. Heptamer of 7 subunits arranged in a ring. Interacts with the chaperonin GroEL.

The protein localises to the cytoplasm. Its function is as follows. Together with the chaperonin GroEL, plays an essential role in assisting protein folding. The GroEL-GroES system forms a nano-cage that allows encapsulation of the non-native substrate proteins and provides a physical environment optimized to promote and accelerate protein folding. GroES binds to the apical surface of the GroEL ring, thereby capping the opening of the GroEL channel. This chain is Co-chaperonin GroES, found in Pelodictyon phaeoclathratiforme (strain DSM 5477 / BU-1).